A 438-amino-acid polypeptide reads, in one-letter code: Probable D-serine dehydratase (438 aa).

K114 carries the post-translational modification N6-(pyridoxal phosphate)lysine.

Belongs to the serine/threonine dehydratase family. DsdA subfamily. Requires pyridoxal 5'-phosphate as cofactor.

It carries out the reaction D-serine = pyruvate + NH4(+). This chain is Probable D-serine dehydratase, found in Histophilus somni (strain 2336) (Haemophilus somnus).